A 387-amino-acid polypeptide reads, in one-letter code: Oxidase FUB9 (387 aa).

Residues 1 to 20 (MSRTNLPIQPAKMSDATSSK) form a disordered region. The region spanning 18–379 (SSKPQIFSIQ…TPAHLSILNA (362 aa)) is the FMN hydroxy acid dehydrogenase domain. Y44 contributes to the a 2-oxocarboxylate binding site. Residues S126, Q150, and T178 each contribute to the FMN site. Residue R187 participates in a 2-oxocarboxylate binding. K250 contributes to the FMN binding site. H274 serves as the catalytic Proton acceptor. R277 provides a ligand contact to a 2-oxocarboxylate. FMN is bound by residues 305-309 (DGGFR) and 328-329 (GR).

It belongs to the FMN-dependent alpha-hydroxy acid dehydrogenase family. Requires FMN as cofactor.

Its pathway is mycotoxin biosynthesis. Its function is as follows. Oxidase; part of the gene cluster that mediates the biosynthesis of fusaric acid, a mycotoxin with low to moderate toxicity to animals and humans, but with high phytotoxic properties. L-aspartate is suggested as fusaric acid amino acid precursor that is activated and further processed to O-acetyl-L-homoserine by cluster enzymes aspartate kinase FUB3 and homoserine O-acetyltransferase FUB5, as well as enzymes of the primary metabolism. The polyketide synthase (PKS) FUB1 generates the triketide trans-2-hexenal which is presumptively released by the hydrolase FUB4 and linked to the NRPS-bound amino acid precursor by NAD(P)-dependent dehydrogenase FUB6. FUB1, FUB4, and the non-canonical NRPS Fub8 may form an enzyme complex. Further processing of the NRPS-bound intermediate might be carried out by FUB6 and the sulfhydrylase FUB7, enabling a spontaneous electrocyclization to close the carbon backbone of fusaric acid. Dihydrofusaric acid is likely to be released via reduction by the thioester reductase (TR) domain of FUB8 whereupon the final oxidation to fusaric acid may (also) be performed by the FMN-dependent dehydrogenase FUB9. The protein is Oxidase FUB9 of Fusarium oxysporum f. sp. lycopersici (strain 4287 / CBS 123668 / FGSC 9935 / NRRL 34936) (Fusarium vascular wilt of tomato).